We begin with the raw amino-acid sequence, 1218 residues long: MADKLYQIKLDIKKGKNIVGSDGSVCSPYLRVTWGGKKQQKTKVITKSAEPEWNFSCLLEIKKEKNPQKPGLEFELIEHKQFSEKEISSTTYQLPESLILGEACNYSVPMSIATSKGDQKCEILIAITAINFGKDKQDEEKKRHDEIQKKFAQLVEQLATDSKAREGMMKLPYEARAQLVEQHRDKLANEKHPDEYVVLLIKEITRKNIQLAGGLQKSHSASNASLGSLSPVTPRVDDGLSVAELKNISVALRSRGLDWIHQFHKLGATTRLVELLSLYVNKKSHTEESLQKQLECLNCIKNLMNNNVGIGYIFGIKDSFKTIVLCLGSEYEKVNELAIGLLNTICFLPKINGHKLLIELLNYFKEEKKESRRFISIVKSLKSKAGVIETKETLKTKSIYLSFINIIVNTPAEIDLRLALRQEFYWLGIKEILVKLSNYTYDESPELDTQITVFEEEESKDNKEMSERFQEFKGLNLDNVDDVLKTLMDRIRPKGLVDCMREISKDLLLLPIDDDVGIRNWVLASRIIKQISLRDKNIGIDEDILPLENLLLMCEQEAKEVPLKSQIESLKKDAQDLAKKITTQDIELKEKVEIIKKNEELTTKQLEEQINIAKKKDEEINQLKALVEQLKLTQGTAKPDSAAASTSVAPPPPPPPMTGGGAPPPPPPPPPMTGGGGPPPPPPPPPMTGGGPPPPPPPPPMTGGGPPPPPPPPGGGPPPPPPPPGAKAGGPPPPPPPFGKGPPPPPGGFGMKKAAAPPRKEVPVPALKMKGLQWVSLNDKKIQGTIFSKFNLDTSKDINLDYKDIEGVFAAKVIEKKESTAPKKTGPVSIIDPKTSQNLSIFLSQFKGKSYDDICGAISKGDETVFQPNHIDALIGFLPSEDDINNINEFLREEKDITKLGPPEQFSMKIHSVPQVKARLQAMKFKYAYESKKSDLKVDIDNFKQGTQEIKGSEKIPKLLEVILILGNFINGGTARGNAYGFKLNTITKLADTKSTDNKLSLVNYLTRVVIKDFPHLNSFAQDLGHVEAAGRVSLSQVQAEVATLRKEFVQVQKSIETLNSGTGEEAVDPFKVKYEEFCTQTAEDIDLITSSSQQIETDYKDLLAMFGEDSKSEPSEFFGMFTKFMDQYDKATKENEQLSIQAEKIAKREAAKKLKEEEDAKKKQLAEERKQKGETVEVKESVVDDLLDTIASGDAFKNRRRRARKTDQDSTIEPIDL.

Residues 1-108 form the C2 domain; the sequence is MADKLYQIKL…ILGEACNYSV (108 aa). One can recognise a GBD/FH3 domain in the interval 139–539; sequence EEKKRHDEIQ…QISLRDKNIG (401 aa). A coiled-coil region spans residues 563–638; sequence LKSQIESLKK…QLKLTQGTAK (76 aa). The tract at residues 634–762 is disordered; it reads QGTAKPDSAA…KAAAPPRKEV (129 aa). Positions 649–747 are enriched in pro residues; it reads APPPPPPPMT…FGKGPPPPPG (99 aa). Residues 652–737 enclose the FH1 domain; the sequence is PPPPPMTGGG…AGGPPPPPPP (86 aa). Positions 759-1155 constitute an FH2 domain; that stretch reads RKEVPVPALK…IAKREAAKKL (397 aa). Residues 1034 to 1061 are a coiled coil; it reads SLSQVQAEVATLRKEFVQVQKSIETLNS. 2 disordered regions span residues 1153–1179 and 1198–1218; these read KKLK…TVEV and KNRR…PIDL. Residues 1174 to 1209 form the DAD domain; sequence GETVEVKESVVDDLLDTIASGDAFKNRRRRARKTDQ.

This sequence belongs to the formin homology family. Diaphanous subfamily. As to quaternary structure, interacts (via GBD/FH3 domain) with activated Rho-GTPases.

Its function is as follows. Formins play an important role in the nucleation of actin and the formation of linear actin filaments. This chain is Formin-A (forA), found in Dictyostelium discoideum (Social amoeba).